We begin with the raw amino-acid sequence, 923 residues long: Neuropilin-1 (923 aa).

A signal peptide spans 1–21 (MERGLPLLCAVLALVLAPAGA). Residues 22-856 (FRNDKCGDTI…PGNVLKTLDP (835 aa)) are Extracellular-facing. Cystine bridges form between Cys-27/Cys-54, Cys-82/Cys-104, and Cys-147/Cys-173. 2 CUB domains span residues 27–141 (CGDT…YEIF) and 147–265 (CSQN…YSVL). Asn-150 carries N-linked (GlcNAc...) asparagine glycosylation. Ca(2+) contacts are provided by Glu-195, Asp-209, and Asp-250. Cys-206 and Cys-228 are joined by a disulfide. 3 N-linked (GlcNAc...) asparagine glycosylation sites follow: Asn-261, Asn-300, and Asn-522. 2 disulfides stabilise this stretch: Cys-275/Cys-424 and Cys-431/Cys-583. 2 consecutive F5/8 type C domains span residues 275 to 424 (CMEA…VYGC) and 431 to 583 (CSGM…LLGC). O-linked (Xyl...) (chondroitin sulfate) serine; alternate glycosylation occurs at Ser-612. A glycan (O-linked (Xyl...) (heparan sulfate) serine; alternate) is linked at Ser-612. One can recognise an MAM domain in the interval 645 to 811 (TYGFNCEFGW…NHISQEDCAK (167 aa)). Positions 820–845 (PEIKIDETGSTPGYEGEGEGDKNISR) are disordered. The O-linked (Xyl...) (chondroitin sulfate) serine glycan is linked to Ser-829. The N-linked (GlcNAc...) asparagine glycan is linked to Asn-842. Residues 857 to 879 (ILITIIAMSALGVLLGAVCGVVL) form a helical membrane-spanning segment. Residues 880 to 923 (YCACWHNGMSERNLSALENYNFELVDGVKLKKDKLNTQSTYSEA) are Cytoplasmic-facing. The residue at position 894 (Ser-894) is a Phosphoserine.

It belongs to the neuropilin family. As to quaternary structure, homodimer, and heterodimer with NRP2. Interacts with FER. Interacts with PLXNB1. Interacts with VEGFA. Interacts with ABCB8/MITOSUR in mitochondria. In terms of assembly, (Microbial infection) Interacts with SARS coronavirus-2/SARS-CoV-2 spike protein S1 (via the CendR motif RRAR). In terms of tissue distribution, the expression of isoforms 1 and 2 does not seem to overlap. Expressed in olfactory epithelium (at protein level). Expressed in fibroblasts (at protein level). Expressed by the blood vessels of different tissues. In the developing embryo it is found predominantly in the nervous system. In adult tissues, it is highly expressed in heart and placenta; moderately in lung, liver, skeletal muscle, kidney and pancreas; and low in adult brain. Expressed in the central nervous system, including olfactory related regions such as the olfactory tubercles and paraolfactory gyri. The expression of isoforms 1 and 2 does not seem to overlap. Found in liver hepatocytes, kidney distal and proximal tubules.

It is found in the secreted. The protein localises to the mitochondrion membrane. The protein resides in the cell membrane. It localises to the cytoplasm. Its function is as follows. Cell-surface receptor involved in the development of the cardiovascular system, in angiogenesis, in the formation of certain neuronal circuits and in organogenesis outside the nervous system. Mediates the chemorepulsant activity of semaphorins. Recognizes a C-end rule (CendR) motif R/KXXR/K on its ligands which causes cellular internalization and vascular leakage. It binds to semaphorin 3A, the PLGF-2 isoform of PGF, the VEGF165 isoform of VEGFA and VEGFB. Coexpression with KDR results in increased VEGF165 binding to KDR as well as increased chemotaxis. Regulates VEGF-induced angiogenesis. Binding to VEGFA initiates a signaling pathway needed for motor neuron axon guidance and cell body migration, including for the caudal migration of facial motor neurons from rhombomere 4 to rhombomere 6 during embryonic development. Regulates mitochondrial iron transport via interaction with ABCB8/MITOSUR. In terms of biological role, (Microbial infection) Acts as a host factor for human coronavirus SARS-CoV-2 infection. Recognizes and binds to CendR motif RRAR on SARS-CoV-2 spike protein S1 which enhances SARS-CoV-2 infection. Functionally, binds VEGF-165 and may inhibit its binding to cells. May induce apoptosis by sequestering VEGF-165. May bind as well various members of the semaphorin family. Its expression has an averse effect on blood vessel number and integrity. In Homo sapiens (Human), this protein is Neuropilin-1.